The sequence spans 156 residues: Snaclec 2 (156 aa).

The first 21 residues, 1 to 21 (MGRFIFLSSGLLVVFLSLSGA), serve as a signal peptide directing secretion. Intrachain disulfides connect C25–C36, C53–C150, and C125–C142. One can recognise a C-type lectin domain in the interval 32 to 151 (FDQHCYRAFD…CGDDYPFVCK (120 aa)).

This sequence belongs to the snaclec family. Heterodimer; disulfide-linked. Expressed by the venom gland.

The protein resides in the secreted. Interferes with one step of hemostasis (modulation of platelet aggregation, or coagulation cascade, for example). This chain is Snaclec 2, found in Bitis gabonica (Gaboon adder).